The sequence spans 60 residues: Histidine-rich metal-binding polypeptide (60 aa).

Residues 1–60 form a disordered region; it reads MAHHEEQHGGHHHHHHHTHHHHYHGGEHHHHHHSSHHEEGCCSTSDSHHQEEGCCHGHHE. The span at 10–35 shows a compositional bias: basic residues; it reads GHHHHHHHTHHHHYHGGEHHHHHHSS. The segment covering 36–60 has biased composition (basic and acidic residues); sequence HHEEGCCSTSDSHHQEEGCCHGHHE. Tandem repeats lie at residues 38-42 and 51-55. The segment at 38–55 is 2 X 5 AA repeats of E-E-G-C-C; the sequence is EEGCCSTSDSHHQEEGCC.

Strongly binds nickel and zinc. Binds other metals less strongly: cobalt &gt; copper &gt; cadmium &gt; manganese. May act to increase, or at least to preserve, urease activity. Exact function is still unknown. This chain is Histidine-rich metal-binding polypeptide (hpn), found in Helicobacter pylori (strain J99 / ATCC 700824) (Campylobacter pylori J99).